We begin with the raw amino-acid sequence, 164 residues long: Reticulon-like protein B22 (164 aa).

The Reticulon domain maps to 1-164 (MGEMGKAMGL…ILEQEAHSDT (164 aa)). Transmembrane regions (helical) follow at residues 30-50 (SLFS…GLLF) and 117-137 (LISG…SMLC).

The protein localises to the endoplasmic reticulum membrane. This is Reticulon-like protein B22 (RTNLB22) from Arabidopsis thaliana (Mouse-ear cress).